The primary structure comprises 83 residues: Cell division topological specificity factor (83 aa).

This sequence belongs to the MinE family.

Its function is as follows. Prevents the cell division inhibition by proteins MinC and MinD at internal division sites while permitting inhibition at polar sites. This ensures cell division at the proper site by restricting the formation of a division septum at the midpoint of the long axis of the cell. The protein is Cell division topological specificity factor of Acidithiobacillus ferrooxidans (strain ATCC 23270 / DSM 14882 / CIP 104768 / NCIMB 8455) (Ferrobacillus ferrooxidans (strain ATCC 23270)).